A 197-amino-acid polypeptide reads, in one-letter code: Ribonuclease HII (197 aa).

The region spanning Glu9–Phe197 is the RNase H type-2 domain. A divalent metal cation is bound by residues Asp15, Glu16, and Asp107.

This sequence belongs to the RNase HII family. Mn(2+) serves as cofactor. Mg(2+) is required as a cofactor.

Its subcellular location is the cytoplasm. The catalysed reaction is Endonucleolytic cleavage to 5'-phosphomonoester.. Its function is as follows. Endonuclease that specifically degrades the RNA of RNA-DNA hybrids. This Haemophilus influenzae (strain PittGG) protein is Ribonuclease HII.